We begin with the raw amino-acid sequence, 73 residues long: MMSSKSHFVALLLIIFLIVNVQSTRIMDDSSDCVFKGPCQRRSDCYERCGLKPPSRAALCQPMGLQGRVCCCL.

Residues 1–23 (MMSSKSHFVALLLIIFLIVNVQS) form the signal peptide. Cystine bridges form between Cys33–Cys72, Cys39–Cys60, Cys45–Cys70, and Cys49–Cys71.

It belongs to the DEFL family.

Its subcellular location is the secreted. In Arabidopsis thaliana (Mouse-ear cress), this protein is Putative defensin-like protein 270.